The chain runs to 447 residues: Glucose-6-phosphate isomerase (447 aa).

Catalysis depends on glutamate 288, which acts as the Proton donor. Residues histidine 309 and lysine 423 contribute to the active site.

Belongs to the GPI family.

The protein resides in the cytoplasm. It carries out the reaction alpha-D-glucose 6-phosphate = beta-D-fructose 6-phosphate. It functions in the pathway carbohydrate biosynthesis; gluconeogenesis. It participates in carbohydrate degradation; glycolysis; D-glyceraldehyde 3-phosphate and glycerone phosphate from D-glucose: step 2/4. Functionally, catalyzes the reversible isomerization of glucose-6-phosphate to fructose-6-phosphate. The polypeptide is Glucose-6-phosphate isomerase (Lactobacillus johnsonii (strain CNCM I-12250 / La1 / NCC 533)).